Here is a 555-residue protein sequence, read N- to C-terminus: MSKPTVEKAANFLRPIVQADLDSGKHAKIVTRFPPEPNGYLHIGHAKSICLNFGLAEEFGGQCNLRFDDTNPAKEDQEYIDAIKADVEWLGFKWAGEERYASDYFDQLHAWAVELIKAGKAFVCDLNAEEMRTYRGSLTEPGKNSPFRDRSVEENLDLFARMKAGEFPDGARSLRAKIDMASPNINLRDPILYRIRHAHHHQTGDKWCIYPSYDFTHGQSDAIEGITHSICTLEFEDHRPLYEWFLENLPVPAQPRQYEFARLNLNYTITSKRKLKQLVDEGHVQGWDDPRMSTLSGYRRRGYTPASIRAFCDMIGVNRAGGVVDIGMLEFAIREDLDANAARAMCVLKPLKVVITNYPEGKVENLELPRHPKQDMGVRVLPFSREIYIDASDFEETPPDGFKRLIPGGEVRLRGSYVIRADEAIKDAAGNIVELRCSYDENTLGKNPEGRKVKGVIHWVPAAESVECEVRLYDRLFRSANPEKSEEGGSFLDNINPDSLVVLTGCRAEPSLAQAAPEERFQFEREGYFVADLKDSQPGKPVFNRTVTLRDSWGQ.

The 'HIGH' region signature appears at 35 to 45 (PEPNGYLHIGH). Residues 36–38 (EPN) and 42–48 (HIGHAKS) each bind ATP. L-glutamine-binding residues include Asp68 and Tyr213. ATP is bound by residues Thr232 and 262 to 263 (RL). The short motif at 269-273 (ITSKR) is the 'KMSKS' region element.

This sequence belongs to the class-I aminoacyl-tRNA synthetase family. As to quaternary structure, monomer.

The protein resides in the cytoplasm. The enzyme catalyses tRNA(Gln) + L-glutamine + ATP = L-glutaminyl-tRNA(Gln) + AMP + diphosphate. The sequence is that of Glutamine--tRNA ligase from Ectopseudomonas mendocina (strain ymp) (Pseudomonas mendocina).